Here is a 362-residue protein sequence, read N- to C-terminus: MGIFDELNLPAGVLYGDDVLKLFQYAREKQFAIPACNVTSSSTAVAALEAARDQKAPIILQTSQGGAAFFAGKGIKDSAEKREASVAGAIAAAHYIRSIAPIYGIPVVLHTDHCAKKLLPWLDGMLEEDEKFFKANGVPLFSSHMIDLSEEPVEENISTCVKYLKRMAPMKQWLEMEIGITGGEEDGVDNSEVDNASLYTQPEDIWQIEEAFRPISPYFSIAAGFGNVHGVYAPGNVKLHPELLGKHQAYVSEKLGGKDKKPVFFVFHGGSGSSKEEYREAISNGVVKVNVDTDLQWSYLVGIRDYILNNIDYLRSQVGNPEGPNKPNKKKYDPRVWIREGEKTMKARVEEALKDFNAAGTV.

Ser63 contacts D-glyceraldehyde 3-phosphate. The active-site Proton donor is Asp112. Zn(2+) is bound by residues His113, Asp147, Glu177, and His229. Gly230 lines the dihydroxyacetone phosphate pocket. His268 contributes to the Zn(2+) binding site. Dihydroxyacetone phosphate-binding positions include 269–271 (GGS) and 290–293 (NVDT).

The protein belongs to the class II fructose-bisphosphate aldolase family. In terms of assembly, homodimer. The cofactor is Zn(2+).

It catalyses the reaction beta-D-fructose 1,6-bisphosphate = D-glyceraldehyde 3-phosphate + dihydroxyacetone phosphate. Its pathway is carbohydrate degradation; glycolysis; D-glyceraldehyde 3-phosphate and glycerone phosphate from D-glucose: step 4/4. Functionally, catalyzes the aldol condensation of dihydroxyacetone phosphate (DHAP or glycerone-phosphate) with glyceraldehyde 3-phosphate (G3P) to form fructose 1,6-bisphosphate (FBP) in gluconeogenesis and the reverse reaction in glycolysis. In Neurospora crassa (strain ATCC 24698 / 74-OR23-1A / CBS 708.71 / DSM 1257 / FGSC 987), this protein is Fructose-bisphosphate aldolase (fba).